The sequence spans 288 residues: MALFRKKDKYIRITPNNSLKGSVSHNVPEVPDELFAKCPACKHMIYKKDLGLAKICPTCSYNFRISAQERLTLTVDEGSFQELFTSIETKDPLRFPGYQEKLQKAKETTGLHEAVLTGKAMVKGQQIALAIMDSHFIMASMGTVVGEKITRLFELAIEENLPVVIFTASGGARMQEGIMSLMQMAKVSAAVKRHSNAGLFYLTILTDPTTGGVTASFAMGGDIILAEPQSLVGFAGRRVIETTVRENLPDDFQKAEFLQDHGFVDAIVKRTELRDKIAHLVAFHGGGQ.

The 255-residue stretch at 34–288 (LFAKCPACKH…HLVAFHGGGQ (255 aa)) folds into the CoA carboxyltransferase N-terminal domain. Zn(2+)-binding residues include Cys-38, Cys-41, Cys-56, and Cys-59. A C4-type zinc finger spans residues 38–59 (CPACKHMIYKKDLGLAKICPTC).

Belongs to the AccD/PCCB family. In terms of assembly, acetyl-CoA carboxylase is a heterohexamer composed of biotin carboxyl carrier protein (AccB), biotin carboxylase (AccC) and two subunits each of ACCase subunit alpha (AccA) and ACCase subunit beta (AccD). It depends on Zn(2+) as a cofactor.

It is found in the cytoplasm. The enzyme catalyses N(6)-carboxybiotinyl-L-lysyl-[protein] + acetyl-CoA = N(6)-biotinyl-L-lysyl-[protein] + malonyl-CoA. The protein operates within lipid metabolism; malonyl-CoA biosynthesis; malonyl-CoA from acetyl-CoA: step 1/1. In terms of biological role, component of the acetyl coenzyme A carboxylase (ACC) complex. Biotin carboxylase (BC) catalyzes the carboxylation of biotin on its carrier protein (BCCP) and then the CO(2) group is transferred by the transcarboxylase to acetyl-CoA to form malonyl-CoA. This Streptococcus pyogenes serotype M28 (strain MGAS6180) protein is Acetyl-coenzyme A carboxylase carboxyl transferase subunit beta.